A 291-amino-acid polypeptide reads, in one-letter code: GTPase Era (291 aa).

An Era-type G domain is found at 2 to 167 (KSGFVSIIGR…LDEIVKCLNE (166 aa)). A G1 region spans residues 10 to 17 (GRTNAGKS). 10–17 (GRTNAGKS) provides a ligand contact to GTP. The segment at 36 to 40 (NATRR) is G2. The interval 57–60 (DTPG) is G3. Residues 57–61 (DTPGL) and 116–119 (NKVD) contribute to the GTP site. The segment at 116–119 (NKVD) is G4. Positions 146–148 (YSS) are G5. The region spanning 186-274 (YRDFILESIY…LLKLFVTVKK (89 aa)) is the KH type-2 domain.

The protein belongs to the TRAFAC class TrmE-Era-EngA-EngB-Septin-like GTPase superfamily. Era GTPase family. In terms of assembly, monomer.

It is found in the cytoplasm. Its subcellular location is the cell inner membrane. In terms of biological role, an essential GTPase that binds both GDP and GTP, with rapid nucleotide exchange. Plays a role in 16S rRNA processing and 30S ribosomal subunit biogenesis and possibly also in cell cycle regulation and energy metabolism. In Campylobacter jejuni subsp. doylei (strain ATCC BAA-1458 / RM4099 / 269.97), this protein is GTPase Era.